We begin with the raw amino-acid sequence, 387 residues long: MSTGSTLNQRSGKPVKLRASCDFCALSKVKCDRGQPQCVRCIKSGIDCNYSESRRIGKAWHHCAPSAVRSTSATTQGTRRKQQTIAQHSPRRRIHRDTQALSAADDAMSPYDPSGYATPFSMFHTLPSPVPESTIRSQTHIESYPSLDGTMAPILCSPESADISLPDIPHVAQLRTNELEGESPSVLQYNPSWDRIMAEHSTAIGDAGDCITRAAAVLKSVRDPRTSCVRSRTPPRSHTQSLDATLDDGRTAMDTVKDILACPCAQEIRVALLLVLIIQQVLESYQALLTQQHDTPREESPLGINLSRYDTPMAIGRYLLDNELRSKIIVQVLSSELEKIGLILDILTRHAQSMAHQPDELILGTYIDSLQTTKKEVLESLEQGNDI.

A DNA-binding region (zn(2)-C6 fungal-type) is located at residues 21–48 (CDFCALSKVKCDRGQPQCVRCIKSGIDC). A compositionally biased stretch (polar residues) spans 68–87 (VRSTSATTQGTRRKQQTIAQ). A disordered region spans residues 68–94 (VRSTSATTQGTRRKQQTIAQHSPRRRI).

It localises to the nucleus. Transcription factor; part of the gene cluster that mediates the biosynthesis of a methylated derivative of known natural products orthosporin and diaporthin. Positively regultaes the expression of the non-reducing polyketide synthase aoiG and the O-methyltransferase aoiO. The protein is Zn(2)-C6 fungal-type trascription factor aoiH of Aspergillus oryzae (strain ATCC 42149 / RIB 40) (Yellow koji mold).